The primary structure comprises 457 residues: UDP-N-acetylmuramoylalanine--D-glutamate ligase (457 aa).

Residue 126 to 132 coordinates ATP; sequence GTAGKGS.

This sequence belongs to the MurCDEF family.

It localises to the cytoplasm. It carries out the reaction UDP-N-acetyl-alpha-D-muramoyl-L-alanine + D-glutamate + ATP = UDP-N-acetyl-alpha-D-muramoyl-L-alanyl-D-glutamate + ADP + phosphate + H(+). It functions in the pathway cell wall biogenesis; peptidoglycan biosynthesis. Functionally, cell wall formation. Catalyzes the addition of glutamate to the nucleotide precursor UDP-N-acetylmuramoyl-L-alanine (UMA). The chain is UDP-N-acetylmuramoylalanine--D-glutamate ligase from Deinococcus radiodurans (strain ATCC 13939 / DSM 20539 / JCM 16871 / CCUG 27074 / LMG 4051 / NBRC 15346 / NCIMB 9279 / VKM B-1422 / R1).